A 130-amino-acid polypeptide reads, in one-letter code: Small ribosomal subunit protein uS8 (130 aa).

This sequence belongs to the universal ribosomal protein uS8 family. As to quaternary structure, part of the 30S ribosomal subunit. Contacts proteins S5 and S12.

Its function is as follows. One of the primary rRNA binding proteins, it binds directly to 16S rRNA central domain where it helps coordinate assembly of the platform of the 30S subunit. This chain is Small ribosomal subunit protein uS8, found in Haemophilus influenzae (strain 86-028NP).